The sequence spans 590 residues: Pescadillo homolog (590 aa).

Residues 297 to 318 (AKADAGEEEEVEEEEEVEDDGL) are disordered. A compositionally biased stretch (acidic residues) spans 302-318 (GEEEEVEEEEEVEDDGL). Positions 337–446 (TAGQLFSNFT…KLLPVSEYAP (110 aa)) constitute a BRCT domain. The interval 452 to 590 (AHLSPWGDAG…RKLNEKKEKR (139 aa)) is disordered. Residues 471–499 (DASDDDEDDEDIEVAPEDYDKDDEEEEAE) are compositionally biased toward acidic residues. The stretch at 489–589 (YDKDDEEEEA…RRKLNEKKEK (101 aa)) forms a coiled coil. Basic and acidic residues-rich tracts occupy residues 500–517 (AEAK…KGTK), 532–547 (DKMT…DKKL), and 567–577 (NDKKSDREAEL).

This sequence belongs to the pescadillo family. As to quaternary structure, component of the NOP7 complex, composed of ERB1, NOP7 and YTM1. The complex is held together by ERB1, which interacts with NOP7 via its N-terminal domain and with YTM1 via a high-affinity interaction between the seven-bladed beta-propeller domains of the 2 proteins. The NOP7 complex associates with the 66S pre-ribosome.

Its subcellular location is the nucleus. It is found in the nucleolus. It localises to the nucleoplasm. Functionally, component of the NOP7 complex, which is required for maturation of the 25S and 5.8S ribosomal RNAs and formation of the 60S ribosome. The polypeptide is Pescadillo homolog (Yarrowia lipolytica (strain CLIB 122 / E 150) (Yeast)).